A 71-amino-acid polypeptide reads, in one-letter code: UPF0346 protein SMU_1621c (71 aa).

It belongs to the UPF0346 family.

The chain is UPF0346 protein SMU_1621c from Streptococcus mutans serotype c (strain ATCC 700610 / UA159).